The sequence spans 377 residues: Phospho-N-acetylmuramoyl-pentapeptide-transferase (377 aa).

10 helical membrane passes run 2–22 (IQLL…TPAL), 55–75 (VAIL…SVLA), 82–102 (ITLS…VGFL), 122–142 (MVLQ…FPDA), 162–182 (LAFA…NLIA), 195–215 (LDGL…LITL), 236–256 (PMDL…FLWW), 263–283 (IFMG…FAVL), 288–308 (LLLV…ILQV), and 343–363 (FWVI…GDWL).

This sequence belongs to the glycosyltransferase 4 family. MraY subfamily. Mg(2+) is required as a cofactor.

It localises to the cell membrane. It catalyses the reaction UDP-N-acetyl-alpha-D-muramoyl-L-alanyl-gamma-D-glutamyl-meso-2,6-diaminopimeloyl-D-alanyl-D-alanine + di-trans,octa-cis-undecaprenyl phosphate = di-trans,octa-cis-undecaprenyl diphospho-N-acetyl-alpha-D-muramoyl-L-alanyl-D-glutamyl-meso-2,6-diaminopimeloyl-D-alanyl-D-alanine + UMP. It participates in cell wall biogenesis; peptidoglycan biosynthesis. Its function is as follows. Catalyzes the initial step of the lipid cycle reactions in the biosynthesis of the cell wall peptidoglycan: transfers peptidoglycan precursor phospho-MurNAc-pentapeptide from UDP-MurNAc-pentapeptide onto the lipid carrier undecaprenyl phosphate, yielding undecaprenyl-pyrophosphoryl-MurNAc-pentapeptide, known as lipid I. This is Phospho-N-acetylmuramoyl-pentapeptide-transferase from Kocuria rhizophila (strain ATCC 9341 / DSM 348 / NBRC 103217 / DC2201).